The chain runs to 879 residues: MTVAELAKQLRISINRLLDVISEAGIVIHDVENDVLSPEQKVAIAGHMKQRKKQSATEKNAAKSDNKSDKNSKTGAKKTTNRRKTDARKSQSSEKKISPRELAQQLAEKKRLEQGNAQRENEEREYQEALAAEEKRQQQEEARKAKREQKEAEAIRAEEERLQMEAALQAQMQEQERIRQEKEAEEAKLNAEKELRKQQEREKRLAQEKAELERKRQEAIRDVELRESYEEEAETRFHIQSKDRNFGSKNDRSGKRAVKNGDDERSGERRNNARNNTRRRNNDNKKGKFEKPVAPISREVRIPETITVGDLAQKMSVKASELIKTMMKLGSMVTINQLLDQETAALIADEMGHRYVLLKENELEEQVMAQASENKMDVVVRAPVVTIMGHVDHGKTSLLDYIRHTRVVSGEAGGITQHIGAYRVTTERGVITFLDTPGHAAFTAMRARGANVTDIVVLVVAADDGVMPQTKEAIQHAKAANVPLIVAVNKMDKPEADPERVKSELSQEGVISEEWGGEHLFAYVSAKSGMGIDDLLEKILIQAEMLELTAPSSGVGKGVVVESRLDRGRGSVATVLVQSGVMKKGNVMLAGMEYGRIRAMLDEKGKELEEAGPSTPVEILGLSGTPNAGDDVIIVENERKAREIANFRQGKFKEIRIARQQKTKLENLFNNADGEISKVSLMIKADVQGSVEALADSLRELSTDEVAVNIIATGIGGITESDVQLALASSATIIAFNVRAEANAKKLIEEEGGDLRYYSIIYQAIDDVKAAMQGLLSPEIREEIIGLAEVRDVFRSSKFGAVAGCIVEDGLLKRHNPIRVLRNNVVIYEGELESLRRFKDDVNEVRAGTECGLGVKNYNDVRVGDQIECYERVEIERKL.

Disordered regions lie at residues 45-216 and 228-293; these read AGHM…ERKR and SYEE…EKPV. 3 stretches are compositionally biased toward basic and acidic residues: residues 60-72, 83-99, and 107-163; these read NAAKSDNKSDKNS, RKTDARKSQSSEKKISP, and AEKK…ERLQ. A compositionally biased stretch (low complexity) spans 164-173; it reads MEAALQAQMQ. Basic and acidic residues-rich tracts occupy residues 174-216, 228-271, and 280-291; these read EQER…ERKR, SYEE…ERRN, and RNNDNKKGKFEK. A tr-type G domain is found at 380–549; the sequence is VRAPVVTIMG…LIQAEMLELT (170 aa). Residues 389–396 form a G1 region; sequence GHVDHGKT. 389–396 is a GTP binding site; sequence GHVDHGKT. The G2 stretch occupies residues 414 to 418; that stretch reads GITQH. The G3 stretch occupies residues 435 to 438; sequence DTPG. GTP-binding positions include 435 to 439 and 489 to 492; these read DTPGH and NKMD. Residues 489–492 are G4; sequence NKMD. A G5 region spans residues 525–527; sequence SAK.

Belongs to the TRAFAC class translation factor GTPase superfamily. Classic translation factor GTPase family. IF-2 subfamily.

Its subcellular location is the cytoplasm. One of the essential components for the initiation of protein synthesis. Protects formylmethionyl-tRNA from spontaneous hydrolysis and promotes its binding to the 30S ribosomal subunits. Also involved in the hydrolysis of GTP during the formation of the 70S ribosomal complex. The protein is Translation initiation factor IF-2 of Dichelobacter nodosus (strain VCS1703A).